A 327-amino-acid chain; its full sequence is Tagatose 1,6-diphosphate aldolase 2 (327 aa).

Belongs to the aldolase LacD family.

The catalysed reaction is D-tagatofuranose 1,6-bisphosphate = D-glyceraldehyde 3-phosphate + dihydroxyacetone phosphate. The protein operates within carbohydrate metabolism; D-tagatose 6-phosphate degradation; D-glyceraldehyde 3-phosphate and glycerone phosphate from D-tagatose 6-phosphate: step 2/2. This is Tagatose 1,6-diphosphate aldolase 2 from Streptococcus pyogenes serotype M6 (strain ATCC BAA-946 / MGAS10394).